We begin with the raw amino-acid sequence, 136 residues long: Ig heavy chain V region BCL1 (136 aa).

The first 19 residues, 1–19 (MGWSCIIFFLVATATGVHS), serve as a signal peptide directing secretion. The Ig-like domain maps to 20–135 (QVQLQQSGPE…WGQGTTLTVS (116 aa)).

The polypeptide is Ig heavy chain V region BCL1 (Mus musculus (Mouse)).